A 680-amino-acid polypeptide reads, in one-letter code: Conserved oligomeric Golgi complex subunit 6 (680 aa).

Residues H479–N517 are disordered.

This sequence belongs to the COG6 family. In terms of assembly, component of the conserved oligomeric Golgi complex which is composed of eight different subunits and is required for normal Golgi morphology and localization. Interacts with COG5, COG7 and COG8.

Its subcellular location is the golgi apparatus membrane. Its function is as follows. Required for normal Golgi function. The sequence is that of Conserved oligomeric Golgi complex subunit 6 from Arabidopsis thaliana (Mouse-ear cress).